Here is a 783-residue protein sequence, read N- to C-terminus: Metabotropic glutamate receptor-like protein J (783 aa).

An N-terminal signal peptide occupies residues Met1 to Ser20. At Ser21 to Val383 the chain is on the extracellular side. The stretch at Asp56–Leu85 forms a coiled coil. Residues Asn181, Asn196, Asn256, Asn282, and Asn315 are each glycosylated (N-linked (GlcNAc...) asparagine). Residues Thr384–Phe404 traverse the membrane as a helical segment. Residues Lys405–Pro415 lie on the Cytoplasmic side of the membrane. A helical transmembrane segment spans residues Ala416 to Ala436. At Gln437–Thr443 the chain is on the extracellular side. Asn441 carries an N-linked (GlcNAc...) asparagine glycan. A helical membrane pass occupies residues Cys444–Val464. Topologically, residues Lys465–Tyr489 are cytoplasmic. Residues Pro490–Gly510 traverse the membrane as a helical segment. Topologically, residues Asn511–Gly538 are extracellular. The chain crosses the membrane as a helical span at residues Ser539–Ile559. Residues Ser560–Lys575 lie on the Cytoplasmic side of the membrane. The chain crosses the membrane as a helical span at residues Pro576–Val596. Residues Ser597 to Gln604 are Extracellular-facing. Residues Thr605–Gly625 traverse the membrane as a helical segment. At Ser626–Val783 the chain is on the cytoplasmic side. A compositionally biased stretch (low complexity) spans Lys647 to Ser656. Disordered stretches follow at residues Lys647 to Lys696 and Gln731 to Val783. Residues Gly670–Ser679 show a composition bias toward acidic residues. Residues Val763–Val783 show a composition bias toward polar residues.

The protein in the N-terminal section; belongs to the BMP lipoprotein family. It in the C-terminal section; belongs to the G-protein coupled receptor 3 family. GABA-B receptor subfamily.

The protein resides in the cell membrane. The protein localises to the membrane. It localises to the endoplasmic reticulum membrane. Its subcellular location is the golgi apparatus membrane. It is found in the nucleus envelope. Functionally, may act during the development and be a negative regulator. The chain is Metabotropic glutamate receptor-like protein J (grlJ) from Dictyostelium discoideum (Social amoeba).